The chain runs to 482 residues: G-protein coupled receptor 37-like 1 (482 aa).

Residues 1 to 25 (MRWLWPLGVSLAVALAAGPERAPRG) form the signal peptide. Disordered stretches follow at residues 25–56 (GVWL…AKGL) and 78–119 (PTQP…VQNP). Residues 26 to 134 (VWLQQGGHQP…ERSYGAYAVL (109 aa)) are Extracellular-facing. A compositionally biased stretch (basic and acidic residues) spans 40–54 (QPDRSRRGAEREDAK). Asn-105 is a glycosylation site (N-linked (GlcNAc...) asparagine). The helical transmembrane segment at 135 to 155 (LLALLLFAVGIVGSLAVMCIV) threads the bilayer. The Cytoplasmic segment spans residues 156-167 (WHSYYLKSAWNS). The helical transmembrane segment at 168 to 188 (VLASLALWDFLVLFFCLPVVT) threads the bilayer. The Extracellular portion of the chain corresponds to 189-205 (FHEITKQRLLGAVSCRA). An intrachain disulfide couples Cys-203 to Cys-286. Residues 206–226 (VPFVEVSSLGVTTFSLCALGI) form a helical membrane-spanning segment. Residues 227–251 (DRFHVATSTLPKARPIEPCPSILAK) lie on the Cytoplasmic side of the membrane. Residues 252–272 (LAVIWVGSMTLAAPELLLWQL) form a helical membrane-spanning segment. Residues 273–310 (VREPSPAAGTVDTCIMKPSAHLPESLYSLVLTYQNARM) are Extracellular-facing. The helical transmembrane segment at 311-331 (WWSFGCYFCLPVLFTVTCQLV) threads the bilayer. The Cytoplasmic segment spans residues 332-361 (TWRVRGTPGRKPESRPGPQEPRGARPSSTV). Residues 338–358 (TPGRKPESRPGPQEPRGARPS) form a disordered region. Residues 362–382 (AGLAAVHALCALPENVCNVVA) form a helical membrane-spanning segment. Topologically, residues 383–398 (AYLSAALTRQTLELLG) are extracellular. The chain crosses the membrane as a helical span at residues 399–419 (LVTQFSTFFKAALTPLLLLCV). At 420–482 (SRPLGRAFLD…PPLLALGTPC (63 aa)) the chain is on the cytoplasmic side. A Phosphothreonine modification is found at Thr-480.

It belongs to the G-protein coupled receptor 1 family. In terms of assembly, interacts with the PTCH1 receptor. Undergoes metalloprotease-mediated cleavage which reduces its constitutive activity. Post-translationally, ubiquitinated.

It localises to the cell membrane. The protein localises to the cell projection. It is found in the cilium membrane. Its function is as follows. G-protein coupled receptor. Has been shown to bind the neuroprotective and glioprotective factor prosaposin (PSAP), leading to endocytosis followed by an ERK phosphorylation cascade. However, other studies have shown that prosaposin does not increase activity. It has been suggested that GPR37L1 is a constitutively active receptor which signals through the guanine nucleotide-binding protein G(s) subunit alpha. Participates in the regulation of postnatal cerebellar development by modulating the Shh pathway. Regulates baseline blood pressure in females and protects against cardiovascular stress in males. Mediates inhibition of astrocyte glutamate transporters and reduction in neuronal N-methyl-D-aspartate receptor activity. This is G-protein coupled receptor 37-like 1 (GPR37L1) from Bos taurus (Bovine).